A 300-amino-acid chain; its full sequence is GTPase Era (300 aa).

An Era-type G domain is found at 8 to 176 (RCGYVAIVGR…EALIAKHLPE (169 aa)). Positions 16–23 (GRPNVGKS) are G1. A GTP-binding site is contributed by 16–23 (GRPNVGKS). Residues 42 to 46 (QTTRH) form a G2 region. Residues 63–66 (DTPG) form a G3 region. GTP contacts are provided by residues 63-67 (DTPGM) and 125-128 (NKTD). A G4 region spans residues 125-128 (NKTD). The segment at 155-157 (ISA) is G5. Residues 199–283 (VREKIMRQLG…MLNLWVKVKG (85 aa)) enclose the KH type-2 domain.

Belongs to the TRAFAC class TrmE-Era-EngA-EngB-Septin-like GTPase superfamily. Era GTPase family. As to quaternary structure, monomer.

Its subcellular location is the cytoplasm. The protein localises to the cell inner membrane. Its function is as follows. An essential GTPase that binds both GDP and GTP, with rapid nucleotide exchange. Plays a role in 16S rRNA processing and 30S ribosomal subunit biogenesis and possibly also in cell cycle regulation and energy metabolism. This chain is GTPase Era, found in Pseudomonas putida (strain W619).